The primary structure comprises 558 residues: Probable beta-glucosidase btgE (558 aa).

Residues 1–18 form the signal peptide; it reads MKAAILATAAALTGSALA. Disordered regions lie at residues 64–105 and 251–305; these read STPS…PETP and LPSS…QMGM. Low complexity-rich tracts occupy residues 76–105 and 252–292; these read PETT…PETP and PSSS…SSSA. Positions 293-305 are enriched in polar residues; sequence EVPQTTGSGQMGM. Catalysis depends on Glu399, which acts as the Proton donor. Glu495 serves as the catalytic Nucleophile.

This sequence belongs to the glycosyl hydrolase 17 family.

The protein localises to the secreted. It is found in the cell wall. It catalyses the reaction Hydrolysis of terminal, non-reducing beta-D-glucosyl residues with release of beta-D-glucose.. It participates in glycan metabolism; cellulose degradation. Its function is as follows. Beta-glucosidases are one of a number of cellulolytic enzymes involved in the degradation of cellulosic biomass. Catalyzes the last step releasing glucose from the inhibitory cellobiose. In Aspergillus terreus (strain NIH 2624 / FGSC A1156), this protein is Probable beta-glucosidase btgE (btgE).